The chain runs to 685 residues: Protein hook (685 aa).

The Calponin-homology (CH) domain maps to 6–122 (MEIYESLIRW…RLLQLILGCA (117 aa)). Positions 134–570 (QIMELEESLQ…LLAADSRYKK (437 aa)) form a coiled coil. Disordered regions lie at residues 430–449 (AAED…SSDV), 593–625 (LEKP…SGRV), and 661–685 (PGQS…FAKK). Over residues 602-623 (ASSSSATGSGGDASTLTSTGSG) the composition is skewed to low complexity. Over residues 661–670 (PGQSFLSRQR) the composition is skewed to polar residues.

This sequence belongs to the hook family. In terms of assembly, homodimer. Interacts with microtubules via its N-terminus.

The protein resides in the cytoplasm. It localises to the cytoskeleton. It is found in the endosome. In terms of biological role, involved in endocytic trafficking. Probably acts as a cytoskeletal linker protein that tethers endosome vesicles to the cytoskeleton. This chain is Protein hook, found in Aedes aegypti (Yellowfever mosquito).